Consider the following 299-residue polypeptide: Inosose dehydratase (299 aa).

Belongs to the IolE/MocC family. Glutathione is required as a cofactor. Co(2+) serves as cofactor. It depends on Mn(2+) as a cofactor.

The catalysed reaction is scyllo-inosose = 3D-3,5/4-trihydroxycyclohexane-1,2-dione + H2O. Functionally, catalyzes the dehydration of inosose (2-keto-myo-inositol, 2KMI or 2,4,6/3,5-pentahydroxycyclohexanone) to 3D-(3,5/4)-trihydroxycyclohexane-1,2-dione (D-2,3-diketo-4-deoxy-epi-inositol). This Klebsiella pneumoniae subsp. pneumoniae (strain ATCC 700721 / MGH 78578) protein is Inosose dehydratase.